The primary structure comprises 126 residues: Diadenosine hexaphosphate hydrolase (126 aa).

Positions 1-121 (MELGAGGVVF…EDLGLLEVAL (121 aa)) constitute a Nudix hydrolase domain. Residues 21–23 (DRM) and 30–32 (KGH) contribute to the substrate site. Positions 31-52 (GHPEPGESLEEAAVREVWEETG) match the Nudix box motif. Residues Glu46 and Glu50 each contribute to the Mg(2+) site. Substrate is bound by residues 66 to 68 (YVN), Arg74, and Glu112.

The protein belongs to the Nudix hydrolase family. As to quaternary structure, monomer. Mg(2+) serves as cofactor.

The catalysed reaction is P(1),P(6)-bis(5'-adenosyl) hexaphosphate + H2O = 2 ATP + 2 H(+). It catalyses the reaction P(1),P(5)-bis(5'-adenosyl) pentaphosphate + H2O = ADP + ATP + 2 H(+). The enzyme catalyses P(1),P(4)-bis(5'-adenosyl) tetraphosphate + H2O = AMP + ATP + 2 H(+). With respect to regulation, strongly inhibited by fluoride ions. In terms of biological role, specifically hydrolyzes (di)adenosine polyphosphates but not ATP or diadenosine triphosphate, generating ATP as the product. Diadenosine hexaphosphate (Ap6A) is the preferred substrate and hydrolysis yields 2 ATP. It is the only enzyme that symmetrically hydrolyzes Ap6A. It also hydrolyzes diadenosine pentaphosphate (Ap5A), diadenosine tetraphosphate (Ap4A) and adenosine tetraphosphate (p4A). This chain is Diadenosine hexaphosphate hydrolase, found in Thermus thermophilus.